The chain runs to 145 residues: D-aminoacyl-tRNA deacylase (145 aa).

Residues 137–138 (GP) carry the Gly-cisPro motif, important for rejection of L-amino acids motif.

It belongs to the DTD family. As to quaternary structure, homodimer.

Its subcellular location is the cytoplasm. The enzyme catalyses glycyl-tRNA(Ala) + H2O = tRNA(Ala) + glycine + H(+). It catalyses the reaction a D-aminoacyl-tRNA + H2O = a tRNA + a D-alpha-amino acid + H(+). Functionally, an aminoacyl-tRNA editing enzyme that deacylates mischarged D-aminoacyl-tRNAs. Also deacylates mischarged glycyl-tRNA(Ala), protecting cells against glycine mischarging by AlaRS. Acts via tRNA-based rather than protein-based catalysis; rejects L-amino acids rather than detecting D-amino acids in the active site. By recycling D-aminoacyl-tRNA to D-amino acids and free tRNA molecules, this enzyme counteracts the toxicity associated with the formation of D-aminoacyl-tRNA entities in vivo and helps enforce protein L-homochirality. The chain is D-aminoacyl-tRNA deacylase from Pseudoalteromonas translucida (strain TAC 125).